A 426-amino-acid polypeptide reads, in one-letter code: Serine hydroxymethyltransferase (426 aa).

(6S)-5,6,7,8-tetrahydrofolate-binding positions include leucine 113 and 117–119; that span reads GHL. Lysine 222 carries the N6-(pyridoxal phosphate)lysine modification. (6S)-5,6,7,8-tetrahydrofolate is bound at residue 363 to 365; it reads SAF.

The protein belongs to the SHMT family. Homodimer. The cofactor is pyridoxal 5'-phosphate.

It is found in the cytoplasm. It carries out the reaction (6R)-5,10-methylene-5,6,7,8-tetrahydrofolate + glycine + H2O = (6S)-5,6,7,8-tetrahydrofolate + L-serine. It participates in one-carbon metabolism; tetrahydrofolate interconversion. It functions in the pathway amino-acid biosynthesis; glycine biosynthesis; glycine from L-serine: step 1/1. Its function is as follows. Catalyzes the reversible interconversion of serine and glycine with tetrahydrofolate (THF) serving as the one-carbon carrier. This reaction serves as the major source of one-carbon groups required for the biosynthesis of purines, thymidylate, methionine, and other important biomolecules. Also exhibits THF-independent aldolase activity toward beta-hydroxyamino acids, producing glycine and aldehydes, via a retro-aldol mechanism. This chain is Serine hydroxymethyltransferase, found in Porphyromonas gingivalis (strain ATCC 33277 / DSM 20709 / CIP 103683 / JCM 12257 / NCTC 11834 / 2561).